The primary structure comprises 533 residues: GDP-fucose protein O-fucosyltransferase 4 (533 aa).

The Cytoplasmic portion of the chain corresponds to 1-20 (MSAGCTQLVWGGRLHWGASH). The helical; Signal-anchor for type II membrane protein transmembrane segment at 21 to 37 (LLSCLLALCALWVLAAA) threads the bilayer. The Lumenal segment spans residues 38–533 (EPTEGGSANV…ETYIKRSMNH (496 aa)). Asn-148, Asn-206, and Asn-358 each carry an N-linked (GlcNAc...) asparagine glycan. Residues Cys-429 and Cys-432 are joined by a disulfide bond. The N-linked (GlcNAc...) asparagine glycan is linked to Asn-511.

Belongs to the glycosyltransferase 10 family.

It is found in the endoplasmic reticulum membrane. The catalysed reaction is L-threonyl-[protein] + GDP-beta-L-fucose = 3-O-(alpha-L-fucosyl)-L-threonyl-[protein] + GDP + H(+). It carries out the reaction L-seryl-[protein] + GDP-beta-L-fucose = 3-O-(alpha-L-fucosyl)-L-seryl-[protein] + GDP + H(+). It functions in the pathway protein modification; protein glycosylation. Protein O-fucosyltransferase that specifically catalyzes O-fucosylation of serine or threonine residues in EMI domains of target proteins. Attaches fucose through an O-glycosidic linkage. O-fucosylation of EMI domain-containing proteins may be required for facilitating protein folding and secretion. The protein is GDP-fucose protein O-fucosyltransferase 4 (fut11) of Xenopus tropicalis (Western clawed frog).